A 533-amino-acid polypeptide reads, in one-letter code: D-3-phosphoglycerate dehydrogenase (533 aa).

Residue A2 is modified to N-acetylalanine. S14 bears the Phosphoserine mark. Position 21 is an N6-acetyllysine; alternate (K21). K21 participates in a covalent cross-link: Glycyl lysine isopeptide (Lys-Gly) (interchain with G-Cter in SUMO1); alternate. A Glycyl lysine isopeptide (Lys-Gly) (interchain with G-Cter in SUMO2); alternate cross-link involves residue K21. Residue K58 is modified to N6-acetyllysine. NAD(+) contacts are provided by residues T78, 155–156 (RI), D175, T207, 234–236 (CAR), and D260. At T78 the chain carries Phosphothreonine. Residue R236 is part of the active site. E265 is an active-site residue. Residue H283 is the Proton donor of the active site. 283-286 (HLGA) serves as a coordination point for NAD(+).

Belongs to the D-isomer specific 2-hydroxyacid dehydrogenase family. As to quaternary structure, homotetramer.

The catalysed reaction is (2R)-3-phosphoglycerate + NAD(+) = 3-phosphooxypyruvate + NADH + H(+). It carries out the reaction (R)-2-hydroxyglutarate + NAD(+) = 2-oxoglutarate + NADH + H(+). It catalyses the reaction (S)-malate + NAD(+) = oxaloacetate + NADH + H(+). The protein operates within amino-acid biosynthesis; L-serine biosynthesis; L-serine from 3-phospho-D-glycerate: step 1/3. In terms of biological role, catalyzes the reversible oxidation of 3-phospho-D-glycerate to 3-phosphonooxypyruvate, the first step of the phosphorylated L-serine biosynthesis pathway. Also catalyzes the reversible oxidation of 2-hydroxyglutarate to 2-oxoglutarate and the reversible oxidation of (S)-malate to oxaloacetate. The polypeptide is D-3-phosphoglycerate dehydrogenase (PHGDH) (Homo sapiens (Human)).